Reading from the N-terminus, the 825-residue chain is Ubiquitin carboxyl-terminal hydrolase 16 (825 aa).

Residues 1–20 (MGKKRTKGRSAPDTVASESA) are disordered. The UBP-type zinc finger occupies 22–141 (PVCRHLRKGL…QVVDYVRKQA (120 aa)). Residues Cys-24, His-26, Cys-48, Cys-51, Cys-73, Cys-76, Cys-81, His-89, His-93, His-102, Cys-115, and Cys-118 each coordinate Zn(2+). Residue Lys-139 forms a Glycyl lysine isopeptide (Lys-Gly) (interchain with G-Cter in SUMO2) linkage. Residues 164-180 (EKESKNEQEREKSENLA) are compositionally biased toward basic and acidic residues. Residues 164 to 184 (EKESKNEQEREKSENLAKETI) form a disordered region. At Ser-188 the chain carries Phosphoserine. The USP domain occupies 195 to 824 (KGLSNLGNTC…QAYLLFYERI (630 aa)). Cys-204 acts as the Nucleophile in catalysis. Residues 393–407 (SGKKSINDKNVKMTM) are compositionally biased toward basic and acidic residues. Residues 393 to 456 (SGKKSINDKN…KQAKNQRRQQ (64 aa)) are disordered. Residues 408 to 419 (EEEDKDSEEEKD) show a composition bias toward acidic residues. At Ser-414 the chain carries Phosphoserine. Over residues 436-456 (HLQKKAKKQAKKQAKNQRRQQ) the composition is skewed to basic residues. Phosphoserine occurs at positions 520 and 531. The Proton acceptor role is filled by His-759.

Belongs to the peptidase C19 family. USP16 subfamily. As to quaternary structure, homotetramer. Associates with late pre-40S ribosomes. Interacts with CEP78; promoting deubiquitination of tektins. Phosphorylated at the onset of mitosis and dephosphorylated during the metaphase/anaphase transition. Phosphorylation by AURKB enhances the deubiquitinase activity.

The protein localises to the nucleus. It is found in the cytoplasm. The enzyme catalyses Thiol-dependent hydrolysis of ester, thioester, amide, peptide and isopeptide bonds formed by the C-terminal Gly of ubiquitin (a 76-residue protein attached to proteins as an intracellular targeting signal).. Specifically deubiquitinates 'Lys-120' of histone H2A (H2AK119Ub), a specific tag for epigenetic transcriptional repression, thereby acting as a coactivator. Deubiquitination of histone H2A is a prerequisite for subsequent phosphorylation at 'Ser-11' of histone H3 (H3S10ph), and is required for chromosome segregation when cells enter into mitosis. In resting B- and T-lymphocytes, phosphorylation by AURKB leads to enhance its activity, thereby maintaining transcription in resting lymphocytes. Regulates Hox gene expression via histone H2A deubiquitination. Prefers nucleosomal substrates. Does not deubiquitinate histone H2B. Also deubiquitinates non-histone proteins, such as ribosomal protein RPS27A: deubiquitination of monoubiquitinated RPS27A promotes maturation of the 40S ribosomal subunit. Also mediates deubiquitination of tektin proteins (TEKT1, TEKT2, TEK3, TEKT4 and TEKT5), promoting their stability. The sequence is that of Ubiquitin carboxyl-terminal hydrolase 16 (Usp16) from Mus musculus (Mouse).